The following is a 907-amino-acid chain: Epidermal growth factor receptor substrate 15-like 1 (907 aa).

Alanine 2 is subject to N-acetylalanine. Residues 15-104 (GNPLYESYYK…SLTMPPPKFH (90 aa)) enclose the EH 1 domain. The segment at 15-368 (GNPLYESYYK…PSERGTPIPD (354 aa)) is interaction with DAB2. In terms of domain architecture, EF-hand 1 spans 48–83 (LSDIILGKIWDLADPEGKGFLDKQGFYVALRLVACA). Phosphotyrosine is present on tyrosine 74. A phosphoserine mark is found at serine 107 and serine 108. The EH 2 domain maps to 127-215 (EKAKFDGIFE…PPLIPPSKRK (89 aa)). The EF-hand 2 domain maps to 159–194 (LPLDVLGRVWDLSDIDKDGHLDRDEFAVAMHLVYRA). Positions 172, 174, 176, 178, and 183 each coordinate Ca(2+). Residues serine 229, serine 244, serine 253, serine 255, and serine 259 each carry the phosphoserine modification. Positions 229–260 (SPPPKDSLRSTPSHGSVSSLNSTGSLSPKHSV) are disordered. The segment covering 241 to 255 (SHGSVSSLNSTGSLS) has biased composition (low complexity). 2 consecutive EF-hand domains span residues 272–307 (ADKM…SGLT) and 308–341 (QNLL…IQQK). Residues 273 to 363 (DKMRFDEIFL…PDMVPPSERG (91 aa)) enclose the EH 3 domain. Serine 360 bears the Phosphoserine mark. A Phosphothreonine modification is found at threonine 364. Serine 369 and serine 375 each carry phosphoserine. Residues 384 to 551 (LDDISQEIAQ…RSKLSQLQES (168 aa)) are a coiled coil. Serine 558 is modified (phosphoserine). Residue tyrosine 562 is modified to Phosphotyrosine. Phosphoserine is present on serine 610. The interval 611 to 860 (QELHPDPFQA…SSSGFADFTS (250 aa)) is disordered. Positions 622 to 636 (DPFKSDPFKGADPFK) are enriched in basic and acidic residues. Polar residues predominate over residues 643-652 (DPFSEQQTAA). A phosphoserine mark is found at serine 664, serine 670, serine 695, serine 715, and serine 732. Over residues 682–696 (NDPFTSDPFTKNPSL) the composition is skewed to polar residues. Residues 703-743 (FESSDPFSSSSISSKGSDPFGTLDPFGSSSFSSAEGFADFS) show a composition bias toward low complexity. A compositionally biased stretch (pro residues) spans 776-790 (ALPPKKPAPPRPKPP). Residue serine 791 is modified to Phosphoserine. Over residues 791–802 (SGQSTPVSQLGS) the composition is skewed to polar residues. At threonine 795 the chain carries Phosphothreonine. Positions 840 to 853 (APSSSAKPPKTSSS) are enriched in low complexity. UIM domains lie at 863-882 (NEEQ…EQER) and 889-907 (QEQE…DMPA).

As to quaternary structure, interacts with EPS15, AGFG1/HRB and AGFG2/HRBL. Associates with the clathrin-associated adapter protein complex 2 (AP-2). Interacts with FCHO1. Interacts with FCHO2. Interacts (via EH domains) with DAB2. Interacts with UBQLN1 (via ubiquitin-like domain). Interacts with CAVIN3 (via leucine-zipper domain). Interacts with REPS2. In terms of processing, phosphorylated on tyrosine residues by EGFR.

It is found in the cell membrane. The protein resides in the nucleus. The protein localises to the membrane. Its subcellular location is the coated pit. In terms of biological role, seems to be a constitutive component of clathrin-coated pits that is required for receptor-mediated endocytosis. Involved in endocytosis of integrin beta-1 (ITGB1) and transferrin receptor (TFR); internalization of ITGB1 as DAB2-dependent cargo but not TFR seems to require association with DAB2. The protein is Epidermal growth factor receptor substrate 15-like 1 (Eps15l1) of Mus musculus (Mouse).